The primary structure comprises 377 residues: UPF0754 membrane protein LMHCC_0318 (377 aa).

2 helical membrane passes run 1-21 (MSVL…GAMT) and 357-377 (YLGG…AMWI).

This sequence belongs to the UPF0754 family.

The protein resides in the cell membrane. This chain is UPF0754 membrane protein LMHCC_0318, found in Listeria monocytogenes serotype 4a (strain HCC23).